Reading from the N-terminus, the 345-residue chain is Protein arginine N-methyltransferase 1 (345 aa).

In terms of domain architecture, SAM-dependent MTase PRMT-type spans 24 to 345 (ADYYFDSYSH…VKNTQQYRMR (322 aa)). Histidine 37, arginine 46, glycine 70, glutamate 92, and glutamate 121 together coordinate S-adenosyl-L-methionine. Residues glutamate 136 and glutamate 145 contribute to the active site.

Belongs to the class I-like SAM-binding methyltransferase superfamily. Protein arginine N-methyltransferase family. In terms of processing, phosphorylated during flagellum resorption.

Its subcellular location is the nucleus. The protein resides in the cell projection. It localises to the cilium. It is found in the flagellum. It carries out the reaction L-arginyl-[protein] + S-adenosyl-L-methionine = N(omega)-methyl-L-arginyl-[protein] + S-adenosyl-L-homocysteine + H(+). The catalysed reaction is L-arginyl-[protein] + 2 S-adenosyl-L-methionine = N(omega),N(omega)-dimethyl-L-arginyl-[protein] + 2 S-adenosyl-L-homocysteine + 2 H(+). Functionally, arginine methyltransferase that methylates (mono and asymmetric dimethylation) the guanidino nitrogens of arginyl residues present in target proteins. Mediates asymmetric dimethylation of components of the axoneme during flagellum resorption, such as CCDC40/FAP172, CCDC65/FAP250, RSP1, RSP2, RPS5, RSP6, and tektin. This is Protein arginine N-methyltransferase 1 (PRMT1) from Chlamydomonas reinhardtii (Chlamydomonas smithii).